The chain runs to 1321 residues: MSDSVILRSVKKFGEENHAFESDGFHNNDKKSRLQDKKKGEGARVGFFELFRFSSSKDNWLMFMGSVCALLHGMAQPGMIIVFGILTDIFVEYDIERQELSIPEKVCMNNTIVWINSSFNQNMTNGTSCGLVDINSEVIKFSGIYAGVGVAVLILGYFQIRLWVITGARQIRKMRKFYFRRIMRMEIGWFDCTSVGELNSRFSDDINKIDEAIADQMALFLQRLSTALSGLLLGFYRGWKLTLVILAVSPLIGIGAAVIGLSVAKFTELELKAYAKAGSIADEVLSSIRTVAAFGGENKEVERYEKNLMFAQRWGIWKGMVMGFFTGYMWCLIFFCYALAFWYGSRLVLDEGEYTPGTLIQIFLCVIIAAMNIGNASSCLEIFSTGCSAASSIFQTIDRQPVMDCMSGDGYKLDRIKGEIEFHNVTFHYPSRPEVKILNNLSMVIKPGETTAFVGSSGAGKSTALQLIQRFYDPCEGMVTLDGHDIRSLNIRWLRDQIGIVEQEPVLFSTTIAENIRLGREEATMEDIVQAAKDANAYNFIMALPQQFDTLVGEGGGQMSGGQKQRVAIARALIRKPKILLLDMATSALDNESEAKVQGALNKIQHGHTIISVAHRLSTVRSADVIIGFEHGTAVERGTHEELLERKGVYFMLVTLQSQEDNTHKETGIKGKDTTEGDTPERTFSRGSYQDSLRASIRQRSKSQLSHLSHEPPLAIGDHKSSYEDRKDNDVLVEEVEPAPVRRILKYNISEWPYILVGALCAAINGAVTPIYSLLFSQILKTFSLVDKEQQRSEIYSMCLFFVILGCVSLFTQFLQGYNFAKSGELLTKRLRKFGFKAMLRQDIGWFDDLKNNPGVLTTRLATDASQVQGATGSQVGMMVNSFTNIFVAVLIAFLFNWKLSLVISVFFPFLALSGAVQTKMLTGFASQDKEILEKAGQITNEALSNIRTVAGIGVEGRFIKAFEVELEKSYKTAIRKANVYGLCYAFSQGISFLANSAAYRYGGYLIVYEDLNFSYVFRVVSSIAMSATAVGRTFSYTPSYAKAKISAARFFQLLDRKPPIDVYSGAGEKWDNFQGKIDFIDCKFTYPSRPDIQVLNGLSVSVDPGQTLAFVGSSGCGKSTSIQLLERFYDPDQGTVMIDGHDSKKVNVQFLRSNIGIVSQEPVLFDCSIMDNIKYGDNTKEISVERAIAAAKQAQLHDFVMSLPEKYETNVGIQGSQLSRGEKQRIAIARAIVRDPKILLLDEATSALDTESEKTVQLALDKAREGRTCIVIAHRLSTIQNSDIIAVMSQGVVIEKGTHKKLMDQKGAYYKLVITGAPIS.

Residues 1–62 (MSDSVILRSV…FSSSKDNWLM (62 aa)) are Cytoplasmic-facing. The 324-residue stretch at 62-385 (MFMGSVCALL…ASSCLEIFST (324 aa)) folds into the ABC transmembrane type-1 1 domain. A helical transmembrane segment spans residues 63 to 83 (FMGSVCALLHGMAQPGMIIVF). The Extracellular portion of the chain corresponds to 84 to 147 (GILTDIFVEY…VIKFSGIYAG (64 aa)). 4 N-linked (GlcNAc...) asparagine glycosylation sites follow: N109, N116, N122, and N125. Residues 148–168 (VGVAVLILGYFQIRLWVITGA) form a helical membrane-spanning segment. At 169 to 215 (RQIRKMRKFYFRRIMRMEIGWFDCTSVGELNSRFSDDINKIDEAIAD) the chain is on the cytoplasmic side. A helical transmembrane segment spans residues 216–236 (QMALFLQRLSTALSGLLLGFY). Residues 237–240 (RGWK) are Extracellular-facing. The chain crosses the membrane as a helical span at residues 241-261 (LTLVILAVSPLIGIGAAVIGL). Residues 262–319 (SVAKFTELELKAYAKAGSIADEVLSSIRTVAAFGGENKEVERYEKNLMFAQRWGIWKG) lie on the Cytoplasmic side of the membrane. The chain crosses the membrane as a helical span at residues 320 to 340 (MVMGFFTGYMWCLIFFCYALA). Over 341–353 (FWYGSRLVLDEGE) the chain is Extracellular. A helical transmembrane segment spans residues 354 to 374 (YTPGTLIQIFLCVIIAAMNIG). Residues 375-755 (NASSCLEIFS…KYNISEWPYI (381 aa)) are Cytoplasmic-facing. Residues 420 to 656 (IEFHNVTFHY…KGVYFMLVTL (237 aa)) enclose the ABC transporter 1 domain. Residue 455-462 (GSSGAGKS) participates in ATP binding. A Phosphothreonine modification is found at T586. S587 is modified (phosphoserine). The interval 651 to 674 (FMLVTLQSQEDNTHKETGIKGKDT) is interaction with HAX1. Basic and acidic residues predominate over residues 662–684 (NTHKETGIKGKDTTEGDTPERTF). A disordered region spans residues 662 to 722 (NTHKETGIKG…PLAIGDHKSS (61 aa)). A phosphoserine mark is found at S692, S703, and S706. In terms of domain architecture, ABC transmembrane type-1 2 spans 755–1043 (ILVGALCAAI…TFSYTPSYAK (289 aa)). Residues 756-776 (LVGALCAAINGAVTPIYSLLF) form a helical membrane-spanning segment. Over 777–794 (SQILKTFSLVDKEQQRSE) the chain is Extracellular. Residues 795–815 (IYSMCLFFVILGCVSLFTQFL) traverse the membrane as a helical segment. Residues 816 to 869 (QGYNFAKSGELLTKRLRKFGFKAMLRQDIGWFDDLKNNPGVLTTRLATDASQVQ) are Cytoplasmic-facing. 2 helical membrane-spanning segments follow: residues 870 to 890 (GATG…FVAV) and 891 to 911 (LIAF…FPFL). Over 912 to 979 (ALSGAVQTKM…SYKTAIRKAN (68 aa)) the chain is Cytoplasmic. The helical transmembrane segment at 980 to 1000 (VYGLCYAFSQGISFLANSAAY) threads the bilayer. Residues 1001 to 1011 (RYGGYLIVYED) are Extracellular-facing. A helical transmembrane segment spans residues 1012 to 1032 (LNFSYVFRVVSSIAMSATAVG). Residues 1033-1321 (RTFSYTPSYA…KLVITGAPIS (289 aa)) lie on the Cytoplasmic side of the membrane. Positions 1078–1316 (IDFIDCKFTY…KGAYYKLVIT (239 aa)) constitute an ABC transporter 2 domain. Position 1113–1120 (1113–1120 (GSSGCGKS)) interacts with ATP. S1321 is modified (phosphoserine).

This sequence belongs to the ABC transporter superfamily. ABCB family. Multidrug resistance exporter (TC 3.A.1.201) subfamily. In terms of assembly, interacts with HAX1. Interacts with the adapter protein complex 2 (AP-2) throught AP2A2 or AP2A1; this interaction regulates cell membrane expression of ABCB11 through its internalization in a clathrin-dependent manner and its subsequent degradation. In terms of processing, N-glycosylated. Ubiquitinated; short-chain ubiquitination regulates cell-Surface expression of ABCB11. In terms of tissue distribution, expressed predominantly, if not exclusively in the liver, where it was further localized to the canalicular microvilli and to subcanalicular vesicles of the hepatocytes by in situ.

The protein localises to the apical cell membrane. Its subcellular location is the recycling endosome membrane. It is found in the endosome. It localises to the cell membrane. The catalysed reaction is cholate(in) + ATP + H2O = cholate(out) + ADP + phosphate + H(+). It catalyses the reaction taurocholate(in) + ATP + H2O = taurocholate(out) + ADP + phosphate + H(+). The enzyme catalyses glycocholate(in) + ATP + H2O = glycocholate(out) + ADP + phosphate + H(+). It carries out the reaction glycochenodeoxycholate(in) + ATP + H2O = glycochenodeoxycholate(out) + ADP + phosphate + H(+). The catalysed reaction is taurochenodeoxycholate(in) + ATP + H2O = taurochenodeoxycholate(out) + ADP + phosphate + H(+). It catalyses the reaction glycoursodeoxycholate(in) + ATP + H2O = glycoursodeoxycholate(out) + ADP + phosphate + H(+). The enzyme catalyses tauroursodeoxycholate(in) + ATP + H2O = tauroursodeoxycholate(out) + ADP + phosphate + H(+). It carries out the reaction taurodeoxycholate(in) + ATP + H2O = taurodeoxycholate(out) + ADP + phosphate + H(+). The catalysed reaction is taurolithocholate 3-sulfate(in) + ATP + H2O = taurolithocholate 3-sulfate(out) + ADP + phosphate + H(+). It catalyses the reaction pravastatin(in) + ATP + H2O = pravastatin(out) + ADP + phosphate + H(+). With respect to regulation, the uptake of taurocholate is inhibited by taurolithocholate sulfate with an IC(50) of 9 uM. Pravastatin competitively inhibits the transport of taurocholic acid. Cyclosporin A, glibenclamide, rifampicin and troglitazonestrongly competitively inhibit the transport activity of taurocholate. The canalicular transport activity of taurocholate is strongly dependent on canalicular membrane cholesterol content. The uptake of taurocholate is increased by short- and medium-chain fatty acids. Cholesterol increases transport capacity of taurocholate without affecting the affinity for the substrate. Its function is as follows. Catalyzes the transport of the major hydrophobic bile salts, such as taurine and glycine-conjugated cholic acid across the canalicular membrane of hepatocytes in an ATP-dependent manner, therefore participates in hepatic bile acid homeostasis and consequently to lipid homeostasis through regulation of biliary lipid secretion in a bile salts dependent manner. Transports taurine-conjugated bile salts more rapidly than glycine-conjugated bile salts. Also transports non-bile acid compounds, such as pravastatin and fexofenadine in an ATP-dependent manner and may be involved in their biliary excretion. This Mus musculus (Mouse) protein is Bile salt export pump.